A 384-amino-acid polypeptide reads, in one-letter code: Cell division protein FtsZ (384 aa).

Residues 20-24 (GGGSN), 107-109 (GTG), E138, R142, and N186 contribute to the GTP site.

The protein belongs to the FtsZ family. As to quaternary structure, homodimer. Polymerizes to form a dynamic ring structure in a strictly GTP-dependent manner. Interacts directly with several other division proteins.

The protein resides in the cytoplasm. Essential cell division protein that forms a contractile ring structure (Z ring) at the future cell division site. The regulation of the ring assembly controls the timing and the location of cell division. One of the functions of the FtsZ ring is to recruit other cell division proteins to the septum to produce a new cell wall between the dividing cells. Binds GTP and shows GTPase activity. The sequence is that of Cell division protein FtsZ from Buchnera aphidicola subsp. Acyrthosiphon pisum (strain APS) (Acyrthosiphon pisum symbiotic bacterium).